Reading from the N-terminus, the 338-residue chain is Flap endonuclease 1 (338 aa).

Residues 1 to 98 are N-domain; it reads MGTDIGDLLQ…ETLNRRKEVR (98 aa). The Mg(2+) site is built by Asp-27, Asp-80, Glu-152, Glu-154, Asp-173, Asp-175, and Asp-236. The I-domain stretch occupies residues 116–257; sequence AAYKYAQASS…TALKLIKKHG (142 aa). Residues 330–338 form an interaction with PCNA region; it reads RQQTLDQWF.

This sequence belongs to the XPG/RAD2 endonuclease family. FEN1 subfamily. In terms of assembly, interacts with PCNA. PCNA stimulates the nuclease activity without altering cleavage specificity. Mg(2+) serves as cofactor.

In terms of biological role, structure-specific nuclease with 5'-flap endonuclease and 5'-3' exonuclease activities involved in DNA replication and repair. During DNA replication, cleaves the 5'-overhanging flap structure that is generated by displacement synthesis when DNA polymerase encounters the 5'-end of a downstream Okazaki fragment. Binds the unpaired 3'-DNA end and kinks the DNA to facilitate 5' cleavage specificity. Cleaves one nucleotide into the double-stranded DNA from the junction in flap DNA, leaving a nick for ligation. Also involved in the base excision repair (BER) pathway. Acts as a genome stabilization factor that prevents flaps from equilibrating into structures that lead to duplications and deletions. Also possesses 5'-3' exonuclease activity on nicked or gapped double-stranded DNA. This chain is Flap endonuclease 1, found in Methanosarcina barkeri (strain Fusaro / DSM 804).